The chain runs to 834 residues: MSLTRRQFAKANAAAIAATVAGMPIASTASNLVTEADATNLKWDKAPCRFCGTGCGVMVATRENRVVATHGDVKADVNRGINCVKGYFLSKIMYGTDRLTQPLLRMKDGKFDKQGEFQPVTWDQAFDIMEEKYKAALKAGGPEAIGMFGSGQWTIWEGYAANKLMKAGFRSNNIDPNARHCMASAAFGFMRTFGMDEPMGCYEDIEAADAFVLWGSNMAEMHPVLWTRLTDRRLSAPHVKVAVMSTFEHRSFELADIPMIFNPQTDLVILNYIANHIIQSGAVNKEFIDKHTRFAKGATNIGYGLRPTDPLELKAENAAVANTWTDIGYEDYVEFLKPYTLEHAAKESGVPAERLKALAELYADPKVKVMSFWTMGFNQHTRGVWANNMIYNIHLLTGKISEPGNSPFSLTGQPSACGTAREVGTFSHRLPADMAVTNPKHRAITEKIWKLPEGTIQEKPGFHAVDQSRKLKDGVLKVYWTQVTNNMQAGPNVMQEILPGWRNPETFVIVSDVYPTVSAQAADLILPSAMWVEKEGAYGNAERRTQFWHQLVTAPGEARSDLWQLVEFSKRFRVDEVWPAELLSKAPEFKDKTLFDVLFKNGQVDRFSNDEIAEGYANYEAEAFGFYLQKGLFEEYAEFGRGHAHDLAAFDVYHRERGLRWPVVDEKETQWRYREGYDPYVEAGSGVQFYGNADKKAIIFALPYEVPAEVPDEEYPFWLSTGRVLEHWHTGSMTQRVDELHKAVPDALVYMHPEDARKLNVRRGSVVKIVSRRGEMQGRVETRGRNKPPMGLVYVPFFDANKLINKVTLDATDPISKQTDFKKCAVKIEVVSIA.

A signal peptide (tat-type signal) is located at residues 1–29 (MSLTRRQFAKANAAAIAATVAGMPIASTA). One can recognise a 4Fe-4S Mo/W bis-MGD-type domain in the interval 41–97 (LKWDKAPCRFCGTGCGVMVATRENRVVATHGDVKADVNRGINCVKGYFLSKIMYGTD). Residues Cys48, Cys51, Cys55, and Cys83 each contribute to the [4Fe-4S] cluster site. Residues Lys85, Gln152, Asn177, Cys181, 214–221 (WGSNMAEM), 245–249 (STFEH), 264–266 (QTD), Met375, Gln379, Asn485, 511–512 (SD), Lys534, Asp561, and 721–730 (TGRVLEHWHT) each bind Mo-bis(molybdopterin guanine dinucleotide). A substrate-binding site is contributed by Phe797. Asn805 and Lys822 together coordinate Mo-bis(molybdopterin guanine dinucleotide).

Belongs to the prokaryotic molybdopterin-containing oxidoreductase family. NasA/NapA/NarB subfamily. In terms of assembly, component of the periplasmic nitrate reductase NapAB complex composed of NapA and NapB. [4Fe-4S] cluster is required as a cofactor. Requires Mo-bis(molybdopterin guanine dinucleotide) as cofactor. Post-translationally, predicted to be exported by the Tat system. The position of the signal peptide cleavage has not been experimentally proven.

It is found in the periplasm. The enzyme catalyses 2 Fe(II)-[cytochrome] + nitrate + 2 H(+) = 2 Fe(III)-[cytochrome] + nitrite + H2O. In terms of biological role, catalytic subunit of the periplasmic nitrate reductase complex NapAB. Receives electrons from NapB and catalyzes the reduction of nitrate to nitrite. The sequence is that of Periplasmic nitrate reductase from Stutzerimonas stutzeri (Pseudomonas stutzeri).